A 389-amino-acid polypeptide reads, in one-letter code: tRNA-specific 2-thiouridylase MnmA (389 aa).

ATP-binding positions include 30 to 37 (GLSGGVDS) and L56. Catalysis depends on C117, which acts as the Nucleophile. C117 and C216 are joined by a disulfide. G142 provides a ligand contact to ATP. The interaction with tRNA stretch occupies residues 166–168 (KDQ). The active-site Cysteine persulfide intermediate is C216. The interaction with tRNA stretch occupies residues 321–322 (RY).

The protein belongs to the MnmA/TRMU family.

The protein localises to the cytoplasm. It carries out the reaction S-sulfanyl-L-cysteinyl-[protein] + uridine(34) in tRNA + AH2 + ATP = 2-thiouridine(34) in tRNA + L-cysteinyl-[protein] + A + AMP + diphosphate + H(+). Functionally, catalyzes the 2-thiolation of uridine at the wobble position (U34) of tRNA, leading to the formation of s(2)U34. The protein is tRNA-specific 2-thiouridylase MnmA of Synechococcus sp. (strain CC9902).